We begin with the raw amino-acid sequence, 592 residues long: MASEIHMTGPMCLIENTNGRLMANPEALKILSAITQPMVVVAIVGLYRTGKSYLMNKLAGKKKGFSLGSTVQSHTKGIWMWCVPHPKKPGHILVLLDTEGLGDVEKGDNQNDSWIFALAVLLSSTFVYNSIGTINQQAMDQLYYVTELTHRIRSKSSPDENENEVEDSADFVSFFPDFVWTLRDFSLDLEADGQPLTPDEYLTYSLKLKKGTSQKDETFNLPRLCIRKFFPKKKCFVFDRPVHRRKLAQLEKLQDEELDPEFVQQVADFCSYIFSNSKTKTLSGGIQVNGPRLESLVLTYVNAISSGDLPCMENAVLALAQIENSAAVQKAIAHYEQQMGQKVQLPTETLQELLDLHRDSEREAIEVFIRSSFKDVDHLFQKELAAQLEKKRDDFCKQNQEASSDRCSALLQVIFSPLEEEVKAGIYSKPGGYRLFVQKLQDLKKKYYEEPRKGIQAEEILQTYLKSKESMTDAILQTDQTLTEKEKEIEVERVKAESAQASAKMLQEMQRKNEQMMEQKERSYQEHLKQLTEKMENDRVQLLKEQERTLALKLQEQEQLLKEGFQKESRIMKNEIQDLQTKMRRRKACTIS.

The interval 1–311 (MASEIHMTGP…NAISSGDLPC (311 aa)) is GTPase domain (Globular). The GB1/RHD3-type G domain maps to 35 to 278 (TQPMVVVAIV…FCSYIFSNSK (244 aa)). GTP-binding positions include 45–52 (GLYRTGKS), 67–69 (LGS), and 97–101 (DTEGL). Residue S156 is modified to Phosphoserine; by PIM1. (Microbial infection) Glycyl lysine isopeptide (Lys-Gly) (interchain with G-Cter in ubiquitin) cross-links involve residues K207, K209, K210, K382, K562, K567, K573, and K587. A Cysteine methyl ester modification is found at C589. C589 carries the S-farnesyl cysteine lipid modification. At T590 the chain carries Phosphothreonine; by PIM1. A propeptide spans 590-592 (TIS) (removed in mature form).

The protein belongs to the TRAFAC class dynamin-like GTPase superfamily. GB1/RHD3 GTPase family. GB1 subfamily. As to quaternary structure, homodimer; homodimerization occurs upon GTP-binding and is required for the second hydrolysis step from GDP to GMP. Undergoes conformational changes and oligomerization upon GTP-binding and hydrolysis. Heterodimer with other family members, including GBP2, GBP3, GBP4 and GBP5. Dimerization regulates subcellular location to membranous structures. Interacts with SQSTM1. Interacts (when phosphorylated) with 14-3-3 protein sigma (SFN); leading to GBP1 retention in the cytosol and inactivation. In terms of processing, isoprenylation is required for proper subcellular location. Post-translationally, phosphorylated at Ser-156 by PIM1 in absence of infection, inhibits GBP1: phosphorylation promotes interaction with 14-3-3 protein sigma (SFN), leading to GBP1 retention in the cytosol. Dephosphorylated in response to infection, liberating GBP1. (Microbial infection) Ubiquitinated by S.flexneri IpaH9.8, leading to its degradation by the proteasome, thereby preventing its ability to promote host defense against bacterial infection.

The protein resides in the cytoplasmic vesicle membrane. It localises to the golgi apparatus membrane. The protein localises to the cell membrane. It is found in the cytoplasm. Its subcellular location is the cytosol. The protein resides in the secreted. It catalyses the reaction GTP + H2O = GDP + phosphate + H(+). The catalysed reaction is GDP + H2O = GMP + phosphate + H(+). Its function is as follows. Interferon (IFN)-inducible GTPase that plays important roles in innate immunity against a diverse range of bacterial, viral and protozoan pathogens. Hydrolyzes GTP to GMP in two consecutive cleavage reactions: GTP is first hydrolyzed to GDP and then to GMP in a processive manner. Following infection, recruited to the pathogen-containing vacuoles or vacuole-escaped bacteria and promotes both inflammasome assembly and autophagy. Acts as a positive regulator of inflammasome assembly by facilitating the detection of inflammasome ligands from pathogens. Involved in the lysis of pathogen-containing vacuoles, releasing pathogens into the cytosol. Following pathogen release in the cytosol, forms a protein coat in a GTPase-dependent manner that encapsulates pathogens and promotes the detection of ligands by pattern recognition receptors. Plays a key role in inflammasome assembly in response to infection by Gram-negative bacteria: following pathogen release in the cytosol, forms a protein coat that encapsulates Gram-negative bacteria and directly binds to lipopolysaccharide (LPS), disrupting the O-antigen barrier and unmasking lipid A that is that detected by the non-canonical inflammasome effector CASP4/CASP11. Also promotes recruitment of proteins that mediate bacterial cytolysis, leading to release double-stranded DNA (dsDNA) that activates the AIM2 inflammasome. Involved in autophagy by regulating bacteriolytic peptide generation via its interaction with ubiquitin-binding protein SQSTM1, which delivers monoubiquitinated proteins to autolysosomes for the generation of bacteriolytic peptides. Confers protection to several pathogens, including the bacterial pathogens L.monocytogenes and M.bovis BCG as well as the protozoan pathogen T.gondii. Exhibits antiviral activity against influenza virus. The polypeptide is Guanylate-binding protein 1 (Homo sapiens (Human)).